The primary structure comprises 232 residues: RNA chaperone ProQ (232 aa).

A disordered region spans residues 105–182 (EAKARVQAQR…REEQHTPVSD (78 aa)). Residues 117–136 (QQAKKREAAAAAGEKEDAPR) are compositionally biased toward basic and acidic residues. Residues 137–146 (RERKPRPTTP) show a composition bias toward basic residues. A compositionally biased stretch (basic and acidic residues) spans 147–177 (RRKEGAERKPRAQKPVEKAPKTAKAPREEQH).

The protein belongs to the ProQ family.

The protein localises to the cytoplasm. RNA chaperone with significant RNA binding, RNA strand exchange and RNA duplexing activities. May regulate ProP activity through an RNA-based, post-transcriptional mechanism. The polypeptide is RNA chaperone ProQ (Shigella dysenteriae serotype 1 (strain Sd197)).